Here is a 231-residue protein sequence, read N- to C-terminus: Probable septum site-determining protein MinC (231 aa).

Positions 100–125 are disordered; that stretch reads EGKEKSPRPAPAPQAPAQNTTPVTKT.

It belongs to the MinC family. Interacts with MinD and FtsZ.

Cell division inhibitor that blocks the formation of polar Z ring septums. Rapidly oscillates between the poles of the cell to destabilize FtsZ filaments that have formed before they mature into polar Z rings. Prevents FtsZ polymerization. This chain is Probable septum site-determining protein MinC, found in Escherichia coli O81 (strain ED1a).